The following is a 417-amino-acid chain: Exodeoxyribonuclease 7 large subunit (417 aa).

The protein belongs to the XseA family. As to quaternary structure, heterooligomer composed of large and small subunits.

It localises to the cytoplasm. It catalyses the reaction Exonucleolytic cleavage in either 5'- to 3'- or 3'- to 5'-direction to yield nucleoside 5'-phosphates.. Functionally, bidirectionally degrades single-stranded DNA into large acid-insoluble oligonucleotides, which are then degraded further into small acid-soluble oligonucleotides. This is Exodeoxyribonuclease 7 large subunit from Lactococcus lactis subsp. lactis (strain IL1403) (Streptococcus lactis).